Consider the following 185-residue polypeptide: Heavy metal-associated isoprenylated plant protein 11 (185 aa).

Residues 39–106 form the HMA domain; the sequence is QQNTNVVFKL…ICKHVAIIAA (68 aa). The span at 109-158 shows a compositional bias: basic and acidic residues; that stretch reads IREPEQNRNPVTRREPNREPEQNRSRVTRREPSREPEPNRAPLARRESRP. The tract at residues 109–185 is disordered; sequence IREPEQNRNP…GENSDGCIIM (77 aa). Residue C182 is modified to Cysteine methyl ester. Residue C182 is the site of S-farnesyl cysteine attachment. Residues 183-185 constitute a propeptide, removed in mature form; it reads IIM.

This sequence belongs to the HIPP family.

Functionally, probable heavy-metal-binding protein. This is Heavy metal-associated isoprenylated plant protein 11 from Arabidopsis thaliana (Mouse-ear cress).